Consider the following 307-residue polypeptide: Aspartate carbamoyltransferase catalytic subunit (307 aa).

The carbamoyl phosphate site is built by arginine 55 and threonine 56. Lysine 85 provides a ligand contact to L-aspartate. Residues arginine 106, histidine 135, and glutamine 138 each coordinate carbamoyl phosphate. 2 residues coordinate L-aspartate: arginine 168 and arginine 230. Positions 268 and 269 each coordinate carbamoyl phosphate.

This sequence belongs to the aspartate/ornithine carbamoyltransferase superfamily. ATCase family. As to quaternary structure, heterododecamer (2C3:3R2) of six catalytic PyrB chains organized as two trimers (C3), and six regulatory PyrI chains organized as three dimers (R2).

It catalyses the reaction carbamoyl phosphate + L-aspartate = N-carbamoyl-L-aspartate + phosphate + H(+). The protein operates within pyrimidine metabolism; UMP biosynthesis via de novo pathway; (S)-dihydroorotate from bicarbonate: step 2/3. In terms of biological role, catalyzes the condensation of carbamoyl phosphate and aspartate to form carbamoyl aspartate and inorganic phosphate, the committed step in the de novo pyrimidine nucleotide biosynthesis pathway. The chain is Aspartate carbamoyltransferase catalytic subunit from Photorhabdus laumondii subsp. laumondii (strain DSM 15139 / CIP 105565 / TT01) (Photorhabdus luminescens subsp. laumondii).